The following is a 94-amino-acid chain: Co-chaperonin GroES (94 aa).

It belongs to the GroES chaperonin family. Heptamer of 7 subunits arranged in a ring. Interacts with the chaperonin GroEL.

The protein resides in the cytoplasm. Its function is as follows. Together with the chaperonin GroEL, plays an essential role in assisting protein folding. The GroEL-GroES system forms a nano-cage that allows encapsulation of the non-native substrate proteins and provides a physical environment optimized to promote and accelerate protein folding. GroES binds to the apical surface of the GroEL ring, thereby capping the opening of the GroEL channel. This Ligilactobacillus salivarius (strain UCC118) (Lactobacillus salivarius) protein is Co-chaperonin GroES.